Consider the following 441-residue polypeptide: Arginine biosynthesis bifunctional protein ArgJ, mitochondrial (441 aa).

Residues Thr177, Lys203, Thr214, Glu303, Asn436, and Ser441 each coordinate substrate. Thr214 (nucleophile) is an active-site residue.

This sequence belongs to the ArgJ family. Heterodimer of an alpha and a beta chain. The alpha and beta chains are autoproteolytically processed from a single precursor protein within the mitochondrion.

It localises to the mitochondrion matrix. The catalysed reaction is N(2)-acetyl-L-ornithine + L-glutamate = N-acetyl-L-glutamate + L-ornithine. The enzyme catalyses L-glutamate + acetyl-CoA = N-acetyl-L-glutamate + CoA + H(+). Its pathway is amino-acid biosynthesis; L-arginine biosynthesis; L-ornithine and N-acetyl-L-glutamate from L-glutamate and N(2)-acetyl-L-ornithine (cyclic): step 1/1. It participates in amino-acid biosynthesis; L-arginine biosynthesis; N(2)-acetyl-L-ornithine from L-glutamate: step 1/4. In terms of biological role, catalyzes two activities which are involved in the cyclic version of arginine biosynthesis: the synthesis of acetylglutamate from glutamate and acetyl-CoA, and of ornithine by transacetylation between acetylornithine and glutamate. The polypeptide is Arginine biosynthesis bifunctional protein ArgJ, mitochondrial (Debaryomyces hansenii (strain ATCC 36239 / CBS 767 / BCRC 21394 / JCM 1990 / NBRC 0083 / IGC 2968) (Yeast)).